The chain runs to 3630 residues: Trimeric autotransporter adhesin AtaA (3630 aa).

The N-terminal stretch at 1–23 (MNKIYKVIWNATLLAWVAVSELA) is a signal peptide. Residues 24–3487 (KGKTKSTTSK…TNQAVVNYLG (3464 aa)) are surface exposed passenger domain. The interval 108–315 (SIAIGENAQG…ASDAVTVAQL (208 aa)) is N-terminal YadA-like head. The interval 316–2904 (DKAYDDTNGR…GRAATEEQLK (2589 aa)) is N-terminal stalk. Residues 2905–3169 (AVITSNITEV…DSDAVNVAQL (265 aa)) are C-terminal YadA-like head. The tract at residues 3170–3561 (KAVGNQVVTT…DVEKKANAGI (392 aa)) is C-terminal stalk. Positions 3539 to 3574 (LDNAFRITNNRIDDVEKKANAGIAAAMALESAPYVP) are outer membrane translocation of the passenger domain. The next 4 beta stranded transmembrane spans lie at 3575–3585 (GKYTYAAGAAY), 3589–3599 (ENAVGVTLRKT), 3608–3614 (TGGVAAA), and 3618–3629 (DASVRIGISGVI). A translocator domain region spans residues 3575–3630 (GKYTYAAGAAYHGGENAVGVTLRKTADNGRWSITGGVAAASQGDASVRIGISGVID).

The protein belongs to the autotransporter-2 (AT-2) (TC 1.B.40) family. In terms of assembly, homotrimer. Interacts with TpgA.

It is found in the cell surface. It localises to the cell outer membrane. Functionally, responsible for autoagglutination, and for adhesion to abiotic and biotic surfaces such as polystyrene (PS), type I collagen, polypropylene (PP), polyvinylchloride (PVC), glass and stainless steel (SS). Adhesion is much stronger than that mediated by Yersinia YadA in a comparative assay. Confers autoagglutination and binding to PS, type I collagen, PP, PVC, glass and SS upon expression in Acinetobacter baylyi strain ADP1. Involved in rapid, irreversible adherence to polyurethane. Forms an unusual biofilm. An extended, surface exposed fiber binds to quartz crystals, PS and glass. It can be removed by washing in distilled water. The protein is Trimeric autotransporter adhesin AtaA of Acinetobacter sp. (strain Tol 5).